Here is a 113-residue protein sequence, read N- to C-terminus: Photosystem II reaction center Psb28 protein (113 aa).

This sequence belongs to the Psb28 family. In terms of assembly, part of the photosystem II complex.

Its subcellular location is the cellular thylakoid membrane. The sequence is that of Photosystem II reaction center Psb28 protein from Prochlorococcus marinus (strain NATL1A).